The sequence spans 208 residues: Meiotically up-regulated gene 9 protein (208 aa).

The tract at residues 77–114 (VPASNEKAARVSNLKTVPSLKRENKEVNANSKPPVKQQ) is disordered.

Its function is as follows. Has a role in meiosis. The protein is Meiotically up-regulated gene 9 protein (mug9) of Schizosaccharomyces pombe (strain 972 / ATCC 24843) (Fission yeast).